The sequence spans 617 residues: tRNA uridine 5-carboxymethylaminomethyl modification enzyme MnmG (617 aa).

Residues 9–14 (GAGHAG), Val120, and Thr175 each bind FAD. 267–281 (GPRYCPSIEDKVVRF) is a binding site for NAD(+). FAD is bound at residue Gln364.

The protein belongs to the MnmG family. As to quaternary structure, homodimer. Heterotetramer of two MnmE and two MnmG subunits. FAD serves as cofactor.

The protein localises to the cytoplasm. Its function is as follows. NAD-binding protein involved in the addition of a carboxymethylaminomethyl (cmnm) group at the wobble position (U34) of certain tRNAs, forming tRNA-cmnm(5)s(2)U34. In Onion yellows phytoplasma (strain OY-M), this protein is tRNA uridine 5-carboxymethylaminomethyl modification enzyme MnmG.